The following is a 389-amino-acid chain: Oxysterol-binding protein 1 (389 aa).

Coiled coils occupy residues 1–31 (MGKKDKNVSVEEEVDEAEIEKLAAENANKPA) and 340–371 (KDDVKGMSQEKVKVEEEQRKLAHHRKNADEWK). Residues 1–43 (MGKKDKNVSVEEEVDEAEIEKLAAENANKPAPQLTKEDLDAMD) are disordered.

Belongs to the OSBP family. As to quaternary structure, interacts with dstC.

The protein resides in the cytoplasm. May play a role in the regulation of the slug-fruiting body switch. This Dictyostelium discoideum (Social amoeba) protein is Oxysterol-binding protein 1 (osbA).